Consider the following 366-residue polypeptide: Erythronate-4-phosphate dehydrogenase (366 aa).

Substrate contacts are provided by S46 and T67. D147 and T175 together coordinate NAD(+). R208 is an active-site residue. Residue D228 coordinates NAD(+). Residue E233 is part of the active site. H250 functions as the Proton donor in the catalytic mechanism. Residue G253 participates in NAD(+) binding. Y254 contacts substrate.

This sequence belongs to the D-isomer specific 2-hydroxyacid dehydrogenase family. PdxB subfamily. Homodimer.

The protein localises to the cytoplasm. The enzyme catalyses 4-phospho-D-erythronate + NAD(+) = (R)-3-hydroxy-2-oxo-4-phosphooxybutanoate + NADH + H(+). It functions in the pathway cofactor biosynthesis; pyridoxine 5'-phosphate biosynthesis; pyridoxine 5'-phosphate from D-erythrose 4-phosphate: step 2/5. In terms of biological role, catalyzes the oxidation of erythronate-4-phosphate to 3-hydroxy-2-oxo-4-phosphonooxybutanoate. The polypeptide is Erythronate-4-phosphate dehydrogenase (Coxiella burnetii (strain Dugway 5J108-111)).